We begin with the raw amino-acid sequence, 211 residues long: Peptide methionine sulfoxide reductase MsrA (211 aa).

Residue Cys-52 is part of the active site.

The protein belongs to the MsrA Met sulfoxide reductase family.

It catalyses the reaction L-methionyl-[protein] + [thioredoxin]-disulfide + H2O = L-methionyl-(S)-S-oxide-[protein] + [thioredoxin]-dithiol. The enzyme catalyses [thioredoxin]-disulfide + L-methionine + H2O = L-methionine (S)-S-oxide + [thioredoxin]-dithiol. Its function is as follows. Has an important function as a repair enzyme for proteins that have been inactivated by oxidation. Catalyzes the reversible oxidation-reduction of methionine sulfoxide in proteins to methionine. This Photobacterium profundum (strain SS9) protein is Peptide methionine sulfoxide reductase MsrA.